An 896-amino-acid chain; its full sequence is Trehalose-phosphatase (896 aa).

A glycosyltransferase region spans residues 1–554; sequence MTTTAQDNSP…SNDDMERKMT (554 aa).

It in the N-terminal section; belongs to the glycosyltransferase 20 family. The protein in the C-terminal section; belongs to the trehalose phosphatase family. In terms of assembly, the trehalose synthase complex is composed of the two catalytic subunits TPS1 and TPS2, and at least one of the two regulatory subunits TPS3 or TSL1. Mg(2+) is required as a cofactor.

Its subcellular location is the cytoplasm. It catalyses the reaction alpha,alpha-trehalose 6-phosphate + H2O = alpha,alpha-trehalose + phosphate. It participates in carbohydrate biosynthesis. Inhibited by EDTA. Functionally, phosphatase catalytic subunit of the trehalose synthase complex that catalyzes the production of trehalose from glucose-6-phosphate and UDP-alpha-D-glucose in a two step process. The protein is Trehalose-phosphatase of Saccharomyces cerevisiae (strain ATCC 204508 / S288c) (Baker's yeast).